A 303-amino-acid polypeptide reads, in one-letter code: Y-box-binding protein 1 (303 aa).

Residues 1-12 (MSSEVETQQQQP) are compositionally biased toward polar residues. Residues 1–28 (MSSEVETQQQQPDALEGKAGQEPAATVG) are disordered. Positions 39-103 (GTVKWFNVRN…GEKGAEAANV (65 aa)) constitute a CSD domain. The interval 43 to 48 (WFNVRN) is C5-methylcytosine binding. A disordered region spans residues 98-303 (AEAANVTGPE…TPEAEQGGAE (206 aa)). A compositionally biased stretch (basic residues) spans 122 to 132 (HYRRYPRRRGP). Low complexity-rich tracts occupy residues 133-143 (PRNYQQNYQNN) and 173-187 (PPYY…RPQY). 2 stretches are compositionally biased toward basic residues: residues 220-229 (FRPRFRRGPP) and 258-270 (RRYR…RRRR). Residues 271 to 284 (PENPKSQDGKETKA) show a composition bias toward basic and acidic residues.

Belongs to the YBX1 family.

It is found in the cytoplasm. It localises to the nucleus. The protein resides in the cytoplasmic granule. Its subcellular location is the secreted. The protein localises to the extracellular exosome. It is found in the P-body. Functionally, DNA- and RNA-binding protein involved in various processes, such as translational repression, RNA stabilization, mRNA splicing and transcription regulation. Binds preferentially to the 5'-[CU]CUGCG-3' RNA motif and specifically recognizes mRNA transcripts modified by C5-methylcytosine (m5C). Promotes mRNA stabilization: acts by binding to m5C-containing mRNAs and preventing mRNA decay. Plays a role in the maternal-to-zygotic transition in early embryo by binding to m5C-containing maternal mRNAs and preventing their degradation. Also promotes maternal-to-zygotic transition in oocytes and embryos by promoting translation repression; molecular mechanisms governing translation repression are unknown. Plays a key role in RNA composition of extracellular exosomes by defining the sorting of small non-coding RNAs, such as tRNAs, Y RNAs, Vault RNAs and miRNAs. Probably sorts RNAs in exosomes by recognizing and binding C5-methylcytosine (m5C)-containing RNAs. Acts as a key effector of epidermal progenitors by preventing epidermal progenitor senescence: acts by regulating the translation of a senescence-associated subset of cytokine mRNAs, possibly by binding to m5C-containing mRNAs. Also involved in pre-mRNA alternative splicing regulation: binds to splice sites in pre-mRNA and regulates splice site selection. Also able to bind DNA and regulate transcription. Binds to promoters that contain a Y-box (5'-CTGATTGGCCAA-3'). Promotes separation of DNA strands that contain mismatches or are modified by cisplatin. Has endonucleolytic activity and can introduce nicks or breaks into double-stranded DNA, suggesting a role in DNA repair. The secreted form acts as an extracellular mitogen and stimulates cell migration and proliferation. This is Y-box-binding protein 1 from Xenopus laevis (African clawed frog).